Here is a 538-residue protein sequence, read N- to C-terminus: AAA ATPase forming ring-shaped complexes (538 aa).

Residues 14 to 54 (ARELRLANHRLGAQNEKLTEALKASREKLAEINSRLADMAE) adopt a coiled-coil conformation. Position 240 to 245 (240 to 245 (GNGKTL)) interacts with ATP.

Belongs to the AAA ATPase family. Homohexamer. Assembles into a hexameric ring structure.

This chain is AAA ATPase forming ring-shaped complexes, found in Corynebacterium urealyticum (strain ATCC 43042 / DSM 7109).